Reading from the N-terminus, the 35-residue chain is Photosystem II reaction center protein M (35 aa).

A helical transmembrane segment spans residues 7–27; that stretch reads GFIATILFVLVPTVFLLILYI.

It belongs to the PsbM family. PSII is composed of 1 copy each of membrane proteins PsbA, PsbB, PsbC, PsbD, PsbE, PsbF, PsbH, PsbI, PsbJ, PsbK, PsbL, PsbM, PsbT, PsbX, PsbY, PsbZ, Psb30/Ycf12, peripheral proteins PsbO, CyanoQ (PsbQ), PsbU, PsbV and a large number of cofactors. It forms dimeric complexes.

The protein resides in the cellular thylakoid membrane. One of the components of the core complex of photosystem II (PSII). PSII is a light-driven water:plastoquinone oxidoreductase that uses light energy to abstract electrons from H(2)O, generating O(2) and a proton gradient subsequently used for ATP formation. It consists of a core antenna complex that captures photons, and an electron transfer chain that converts photonic excitation into a charge separation. This subunit is found at the monomer-monomer interface. The polypeptide is Photosystem II reaction center protein M (Crocosphaera subtropica (strain ATCC 51142 / BH68) (Cyanothece sp. (strain ATCC 51142))).